Consider the following 698-residue polypeptide: FHF complex subunit HOOK-interacting protein 2B (698 aa).

Belongs to the FHIP family.

This Xenopus tropicalis (Western clawed frog) protein is FHF complex subunit HOOK-interacting protein 2B (fhip2b).